The following is a 405-amino-acid chain: Enoyl-[acyl-carrier-protein] reductase [NADH] (405 aa).

NAD(+) is bound by residues 48 to 53, 74 to 75, 111 to 112, and 140 to 141; these read GASSGY, FE, DA, and LA. Tyr226 lines the substrate pocket. Tyr236 acts as the Proton donor in catalysis. Residues Lys245 and 274-276 contribute to the NAD(+) site; that span reads VVT.

This sequence belongs to the TER reductase family. As to quaternary structure, monomer.

The catalysed reaction is a 2,3-saturated acyl-[ACP] + NAD(+) = a (2E)-enoyl-[ACP] + NADH + H(+). It participates in lipid metabolism; fatty acid biosynthesis. Its function is as follows. Involved in the final reduction of the elongation cycle of fatty acid synthesis (FAS II). Catalyzes the reduction of a carbon-carbon double bond in an enoyl moiety that is covalently linked to an acyl carrier protein (ACP). This Xanthomonas oryzae pv. oryzae (strain PXO99A) protein is Enoyl-[acyl-carrier-protein] reductase [NADH].